The primary structure comprises 377 residues: dTDP-fucopyranose mutase (377 aa).

FAD-binding positions include Ser12, 31 to 32 (DD), Asn39, 58 to 59 (HI), Arg348, and 355 to 360 (LDMDVC).

It belongs to the UDP-galactopyranose/dTDP-fucopyranose mutase family. FAD serves as cofactor.

The catalysed reaction is dTDP-alpha-D-fucose = dTDP-alpha-D-fucofuranose. It participates in bacterial outer membrane biogenesis; LPS O-antigen biosynthesis. Inhibited by Cu(2+), while other divalent cations such as Ca(2+), Co(2+), Fe(2+) and Mg(2+) have no obvious effects on enzyme activity. Functionally, catalyzes the conversion of dTDP-alpha-D-fucopyranose to dTDP-alpha-D-fucofuranose. This is a step in the biosynthesis of D-fucofuranose, a component of E.coli O52 O antigen. This Escherichia coli protein is dTDP-fucopyranose mutase (fcf2).